A 462-amino-acid chain; its full sequence is Dipeptidyl peptidase 1 (462 aa).

The first 24 residues, 1-24 (MGPWTHSLRAALLLVLLGVCTVSS), serve as a signal peptide directing secretion. Asn29 and Asn53 each carry an N-linked (GlcNAc...) asparagine glycan. 2 disulfides stabilise this stretch: Cys30/Cys118 and Cys54/Cys136. The propeptide occupies 135–229 (ACFVGKKMAN…TDEIQQQILS (95 aa)). Asn144 carries N-linked (GlcNAc...) asparagine glycosylation. Cystine bridges form between Cys254-Cys297, Cys290-Cys330, and Cys320-Cys336. Cys257 is a catalytic residue. Asn275 carries an N-linked (GlcNAc...) asparagine glycan. Residues Phe301 and Tyr303 each contribute to the chloride site. Residue Tyr346 participates in chloride binding. Catalysis depends on residues His404 and Asn426.

It belongs to the peptidase C1 family. Tetramer of heterotrimers consisting of exclusion domain, heavy- and light chains. It depends on chloride as a cofactor. Broadly distributed, but higher levels found in liver, spleen, intestine, lung and kidney.

The protein localises to the lysosome. It catalyses the reaction Release of an N-terminal dipeptide, Xaa-Yaa-|-Zaa-, except when Xaa is Arg or Lys, or Yaa or Zaa is Pro.. Thiol protease. Has dipeptidylpeptidase activity. Active against a broad range of dipeptide substrates composed of both polar and hydrophobic amino acids. Proline cannot occupy the P1 position and arginine cannot occupy the P2 position of the substrate. Can act as both an exopeptidase and endopeptidase. Activates serine proteases such as elastase, cathepsin G and granzymes A and B. The chain is Dipeptidyl peptidase 1 (Ctsc) from Rattus norvegicus (Rat).